The chain runs to 219 residues: Pyridoxal 5'-phosphate synthase subunit PDX2 (219 aa).

L-glutamine is bound at residue 52 to 54 (GES). C87 acts as the Nucleophile in catalysis. Residues R121 and 153 to 154 (IR) each bind L-glutamine. Catalysis depends on charge relay system residues H196 and E198.

The protein belongs to the glutaminase PdxT/SNO family. As to quaternary structure, in the presence of Pdx1, forms a dodecamer of heterodimers. Only shows activity in the heterodimer.

Its subcellular location is the cytoplasm. It catalyses the reaction aldehydo-D-ribose 5-phosphate + D-glyceraldehyde 3-phosphate + L-glutamine = pyridoxal 5'-phosphate + L-glutamate + phosphate + 3 H2O + H(+). The enzyme catalyses L-glutamine + H2O = L-glutamate + NH4(+). It functions in the pathway cofactor biosynthesis; pyridoxal 5'-phosphate biosynthesis. Its function is as follows. Catalyzes the hydrolysis of glutamine to glutamate and ammonia as part of the biosynthesis of pyridoxal 5'-phosphate. The resulting ammonia molecule is channeled to the active site of Pdx1. The sequence is that of Pyridoxal 5'-phosphate synthase subunit PDX2 from Plasmodium falciparum (isolate 3D7).